The chain runs to 48 residues: Large ribosomal subunit protein bL33A (48 aa).

Belongs to the bacterial ribosomal protein bL33 family.

The polypeptide is Large ribosomal subunit protein bL33A (Exiguobacterium sibiricum (strain DSM 17290 / CCUG 55495 / CIP 109462 / JCM 13490 / 255-15)).